We begin with the raw amino-acid sequence, 184 residues long: Chromophore lyase CpcS/CpeS 1 (184 aa).

The protein belongs to the CpcS/CpeS biliprotein lyase family.

In terms of biological role, covalently attaches a chromophore to Cys residue(s) of phycobiliproteins. The chain is Chromophore lyase CpcS/CpeS 1 from Synechococcus sp. (strain JA-3-3Ab) (Cyanobacteria bacterium Yellowstone A-Prime).